The following is a 149-amino-acid chain: D-aminoacyl-tRNA deacylase (149 aa).

The Gly-cisPro motif, important for rejection of L-amino acids motif lies at 137 to 138 (GP).

The protein belongs to the DTD family. As to quaternary structure, homodimer.

The protein localises to the cytoplasm. The enzyme catalyses glycyl-tRNA(Ala) + H2O = tRNA(Ala) + glycine + H(+). It carries out the reaction a D-aminoacyl-tRNA + H2O = a tRNA + a D-alpha-amino acid + H(+). In terms of biological role, an aminoacyl-tRNA editing enzyme that deacylates mischarged D-aminoacyl-tRNAs. Also deacylates mischarged glycyl-tRNA(Ala), protecting cells against glycine mischarging by AlaRS. Acts via tRNA-based rather than protein-based catalysis; rejects L-amino acids rather than detecting D-amino acids in the active site. By recycling D-aminoacyl-tRNA to D-amino acids and free tRNA molecules, this enzyme counteracts the toxicity associated with the formation of D-aminoacyl-tRNA entities in vivo and helps enforce protein L-homochirality. This chain is D-aminoacyl-tRNA deacylase, found in Clostridioides difficile (strain 630) (Peptoclostridium difficile).